A 141-amino-acid polypeptide reads, in one-letter code: Large ribosomal subunit protein uL11 (141 aa).

It belongs to the universal ribosomal protein uL11 family. Part of the ribosomal stalk of the 50S ribosomal subunit. Interacts with L10 and the large rRNA to form the base of the stalk. L10 forms an elongated spine to which L12 dimers bind in a sequential fashion forming a multimeric L10(L12)X complex. One or more lysine residues are methylated.

In terms of biological role, forms part of the ribosomal stalk which helps the ribosome interact with GTP-bound translation factors. In Brevibacillus brevis (strain 47 / JCM 6285 / NBRC 100599), this protein is Large ribosomal subunit protein uL11.